An 87-amino-acid polypeptide reads, in one-letter code: MDKARKLELIKKFGRSEGDTGSPEVQVALLTERIQSLTEHLKVHKKDHHSRRGLLMMVGQRRGLLNYLSDQDIERYRTLIKELGLRR.

This sequence belongs to the universal ribosomal protein uS15 family. As to quaternary structure, part of the 30S ribosomal subunit. Forms a bridge to the 50S subunit in the 70S ribosome, contacting the 23S rRNA.

In terms of biological role, one of the primary rRNA binding proteins, it binds directly to 16S rRNA where it helps nucleate assembly of the platform of the 30S subunit by binding and bridging several RNA helices of the 16S rRNA. Forms an intersubunit bridge (bridge B4) with the 23S rRNA of the 50S subunit in the ribosome. This Clostridium beijerinckii (strain ATCC 51743 / NCIMB 8052) (Clostridium acetobutylicum) protein is Small ribosomal subunit protein uS15.